A 715-amino-acid chain; its full sequence is Probable serine/threonine-protein kinase mkcE (715 aa).

3 disordered regions span residues 1 to 125 (MQKI…SQHQ), 228 to 330 (QLQQ…TTTT), and 366 to 385 (GVDNLSSTTTSLSQNPPIQP). A compositionally biased stretch (gly residues) spans 42 to 53 (YDGGGSGSGSGG). 2 stretches are compositionally biased toward low complexity: residues 54-70 (SSSNSSGSSRKINTGGN) and 80-125 (SPSN…SQHQ). Positions 207-241 (TGKKNFQQQQLQQLQQQQQQQQLQQQQHQQHNHQI) form a coiled coil. Residues 367–378 (VDNLSSTTTSLS) show a composition bias toward low complexity. Residues 427-683 (RIGENAEVKG…PTQLLQHPFI (257 aa)) form the Protein kinase domain. ATP contacts are provided by residues 433-441 (EVKGAFGTV) and K459. The active-site Proton acceptor is the D550.

The protein belongs to the protein kinase superfamily. STE Ser/Thr protein kinase family. STE20 subfamily. It depends on Mg(2+) as a cofactor.

It carries out the reaction L-seryl-[protein] + ATP = O-phospho-L-seryl-[protein] + ADP + H(+). The catalysed reaction is L-threonyl-[protein] + ATP = O-phospho-L-threonyl-[protein] + ADP + H(+). The chain is Probable serine/threonine-protein kinase mkcE from Dictyostelium discoideum (Social amoeba).